A 396-amino-acid polypeptide reads, in one-letter code: Elongation factor Tu (396 aa).

A tr-type G domain is found at 11–205 (KPHVNIGTIG…VVDEYIPTPE (195 aa)). The tract at residues 20–27 (GHVDHGKT) is G1. 20 to 27 (GHVDHGKT) lines the GTP pocket. Threonine 27 lines the Mg(2+) pocket. Residues 61–65 (GITIN) form a G2 region. The interval 82–85 (DAPG) is G3. Residues 82-86 (DAPGH) and 137-140 (NKCD) contribute to the GTP site. The interval 137–140 (NKCD) is G4. A G5 region spans residues 175 to 177 (SAL).

The protein belongs to the TRAFAC class translation factor GTPase superfamily. Classic translation factor GTPase family. EF-Tu/EF-1A subfamily. Monomer.

It is found in the cytoplasm. It catalyses the reaction GTP + H2O = GDP + phosphate + H(+). In terms of biological role, GTP hydrolase that promotes the GTP-dependent binding of aminoacyl-tRNA to the A-site of ribosomes during protein biosynthesis. The protein is Elongation factor Tu of Lactobacillus delbrueckii subsp. bulgaricus (strain ATCC 11842 / DSM 20081 / BCRC 10696 / JCM 1002 / NBRC 13953 / NCIMB 11778 / NCTC 12712 / WDCM 00102 / Lb 14).